We begin with the raw amino-acid sequence, 37 residues long: Alpha-conotoxin TxID (37 aa).

Positions 1-21 are excised as a propeptide; that stretch reads FDGRNAAGNDKMSALMALTTR. Disulfide bonds link Cys-23–Cys-29 and Cys-24–Cys-36. Cys-36 is subject to Cysteine amide.

This sequence belongs to the conotoxin A superfamily. In terms of processing, unmodified Met-32 is essential for toxin binding to rat alpha-3-beta-4/CHRNA3-CHRNB4 nAChR. An oxidation of this methionine provokes a 13.3-fold decrease in inhibitory potency (IC(50)=245 nM instead of 18 nM). Owing to its potent activity, derivatives of this toxin have a potential in the development of a novel drug. Unfortunately, the oxidation of the methionine is readily to happen during toxin synthesis and oxidation steps as well as under oxidative environment in vivo, which should still be considered to find a solution to this major drawback. Expressed by the venom duct.

It localises to the secreted. Its function is as follows. Alpha-conotoxins act on postsynaptic membranes, they bind to the nicotinic acetylcholine receptors (nAChR) and thus inhibit them. This toxin inhibits alpha-3-beta-4/CHRNA3-CHRNB4 (IC(50)=3.6-18.38 nM), alpha-6/alpha-3-beta-4 (CHRNA6/CHRNA3-CHRNB4) (IC(50)=33.9-94.1 nM), and alpha-2-beta-4/CHRNA2-CHRNB4 (IC(50)=4550 nM) nAChRs. The toxin competes with agonists in the orthosteric binding site of alpha-3-beta-4/CHRNA3-CHRNB4 and alpha-6-beta-4/CHRNA6-CHRNB4. The sequence is that of Alpha-conotoxin TxID from Conus textile (Cloth-of-gold cone).